The primary structure comprises 379 residues: 1-deoxy-D-xylulose 5-phosphate reductoisomerase (379 aa).

The NADPH site is built by threonine 10, glycine 11, serine 12, isoleucine 13, arginine 38, asparagine 39, and asparagine 121. Lysine 122 is a binding site for 1-deoxy-D-xylulose 5-phosphate. An NADPH-binding site is contributed by glutamate 123. Mn(2+) is bound at residue aspartate 147. Positions 148, 149, 173, and 196 each coordinate 1-deoxy-D-xylulose 5-phosphate. Glutamate 149 contributes to the Mn(2+) binding site. Glycine 202 lines the NADPH pocket. The 1-deoxy-D-xylulose 5-phosphate site is built by serine 209, asparagine 214, lysine 215, and glutamate 218. Glutamate 218 is a Mn(2+) binding site.

It belongs to the DXR family. Mg(2+) is required as a cofactor. The cofactor is Mn(2+).

It carries out the reaction 2-C-methyl-D-erythritol 4-phosphate + NADP(+) = 1-deoxy-D-xylulose 5-phosphate + NADPH + H(+). It participates in isoprenoid biosynthesis; isopentenyl diphosphate biosynthesis via DXP pathway; isopentenyl diphosphate from 1-deoxy-D-xylulose 5-phosphate: step 1/6. Catalyzes the NADPH-dependent rearrangement and reduction of 1-deoxy-D-xylulose-5-phosphate (DXP) to 2-C-methyl-D-erythritol 4-phosphate (MEP). The protein is 1-deoxy-D-xylulose 5-phosphate reductoisomerase of Chlamydia trachomatis serovar L2 (strain ATCC VR-902B / DSM 19102 / 434/Bu).